Here is an 83-residue protein sequence, read N- to C-terminus: Colicin-E5 immunity protein (83 aa).

Functionally, this protein is able to protect a cell, which harbors the plasmid ColE5 encoding colicin E5, against colicin E5. The sequence is that of Colicin-E5 immunity protein (imm) from Escherichia coli.